We begin with the raw amino-acid sequence, 129 residues long: 3-oxo-4,17-pregnadiene-20-carboxyl-CoA hydratase beta subunit (129 aa).

It belongs to the thioester dehydratase family. As to quaternary structure, heterodimer composed of ChsH1 and ChsH2. Two heterodimers combine to form a heterotetramer. The complex interacts with Ltp2 via the DUF35 C-terminal region of ChsH2. The ChsH1-ChsH2-Ltp2 protein complex is composed of two protomers that form a heterohexameric structure through the Ltp2 dimerization interface.

The enzyme catalyses 3-oxochola-4,17-dien-22-oyl-CoA + H2O = 17-hydroxy-3-oxochol-4-en-22-oyl-CoA. It carries out the reaction (2E)-octenoyl-CoA + H2O = 3-hydroxyoctanoyl-CoA. It catalyses the reaction (2E)-decenoyl-CoA + H2O = 3-hydroxydecanoyl-CoA. It functions in the pathway steroid metabolism; cholesterol degradation. In the absence of the Ltp2 aldolase, ChsH1/ChsH2 can hydrate only about 30% of the 3-OPDC-CoA substrate. Complete turnover requires the presence of Ltp2. Its function is as follows. Involved in cholesterol side chain degradation. Catalyzes the hydration of 3-oxo-4,17-pregnadiene-20-carboxyl-CoA (3-OPDC-CoA) to form 17-hydroxy-3-oxo-4-pregnene-20-carboxyl-CoA (17-HOPC-CoA), in the modified beta-oxidation pathway for cholesterol side chain degradation. Can also use octenoyl-CoA and decenoyl-CoA, with lower efficiency. This chain is 3-oxo-4,17-pregnadiene-20-carboxyl-CoA hydratase beta subunit, found in Mycobacterium tuberculosis (strain ATCC 25618 / H37Rv).